The following is an 817-amino-acid chain: Lon protease (817 aa).

The region spanning 22-216 is the Lon N-terminal domain; the sequence is VPIMPLSDGV…KVTRQLNHQL (195 aa). 368-375 contacts ATP; sequence GPPGTGKT. In terms of domain architecture, Lon proteolytic spans 604–785; the sequence is ALTPGVVMGL…GDVLELALNG (182 aa). Residues Ser-691 and Lys-734 contribute to the active site. The disordered stretch occupies residues 784–817; it reads NGNGATKKKKKTPAKSKKSTKPAAKKTAARKSRK. Positions 789–817 are enriched in basic residues; the sequence is TKKKKKTPAKSKKSTKPAAKKTAARKSRK.

This sequence belongs to the peptidase S16 family. Homohexamer. Organized in a ring with a central cavity.

The protein localises to the cytoplasm. The catalysed reaction is Hydrolysis of proteins in presence of ATP.. ATP-dependent serine protease that mediates the selective degradation of mutant and abnormal proteins as well as certain short-lived regulatory proteins. Required for cellular homeostasis and for survival from DNA damage and developmental changes induced by stress. Degrades polypeptides processively to yield small peptide fragments that are 5 to 10 amino acids long. Binds to DNA in a double-stranded, site-specific manner. In Desulfosudis oleivorans (strain DSM 6200 / JCM 39069 / Hxd3) (Desulfococcus oleovorans), this protein is Lon protease.